Reading from the N-terminus, the 311-residue chain is MTALSRIPAFDAAETAALLDYPALLATLTHTVAEYAAGEIVSPERLVVPLQGGGVMLSMPSSARDLASHKLVNVCPGNAARGLPTILGQVSAYDATTGEMRFVLDGPTVTGRRTAAITALGIQALHGAAPRDILLIGTGKQAANHAEALAAIFPDARLHVRGSRAGSAAAFCAAHRAQAPQLAPLDGDAIPDAIDVVVTLTTSRTPVYREAAREGRLVVGVGAFTADAAEIDADTVRHSRLVVDDPAGARHEAGDLIVAQVDWQRVASLADVLRGAFERSGPLLFKTVGCAAWDLAACRTARDALDARRGG.

This sequence belongs to the ornithine cyclodeaminase/mu-crystallin family.

It carries out the reaction L-proline + NAD(+) = 1-pyrroline-2-carboxylate + NADH + H(+). It catalyses the reaction L-proline + NADP(+) = 1-pyrroline-2-carboxylate + NADPH + H(+). Functionally, catalyzes the reduction of Delta(1)-pyrroline-2-carboxylate (Pyr2C) to L-proline, using preferentially NADPH over NADH as the electron donor. May be involved in a degradation pathway that converts trans-3-hydroxy-L-proline (t3LHyp) to L-proline. The polypeptide is Delta(1)-pyrroline-2-carboxylate reductase 2 (Burkholderia ambifaria (strain ATCC BAA-244 / DSM 16087 / CCUG 44356 / LMG 19182 / AMMD) (Burkholderia cepacia (strain AMMD))).